The chain runs to 955 residues: 2-oxoglutarate dehydrogenase E1 component (955 aa).

The protein belongs to the alpha-ketoglutarate dehydrogenase family. As to quaternary structure, homodimer. Part of the 2-oxoglutarate dehydrogenase (OGDH) complex composed of E1 (2-oxoglutarate dehydrogenase), E2 (dihydrolipoamide succinyltransferase) and E3 (dihydrolipoamide dehydrogenase); the complex contains multiple copies of the three enzymatic components (E1, E2 and E3). Thiamine diphosphate serves as cofactor.

The catalysed reaction is N(6)-[(R)-lipoyl]-L-lysyl-[protein] + 2-oxoglutarate + H(+) = N(6)-[(R)-S(8)-succinyldihydrolipoyl]-L-lysyl-[protein] + CO2. Functionally, E1 component of the 2-oxoglutarate dehydrogenase (OGDH) complex which catalyzes the decarboxylation of 2-oxoglutarate, the first step in the conversion of 2-oxoglutarate to succinyl-CoA and CO(2). This chain is 2-oxoglutarate dehydrogenase E1 component, found in Bacillus cereus (strain 03BB102).